The sequence spans 520 residues: MPLELTQSRVQKIWVPVDHRPSLPRSCGPKLTNSPTVIVMVGLPARGKTYISKKLTRYLNWIGVPTKVFNVGEYRREAVKQYSSYNFFRPDNEEAMKVRKQCALAALRDVKSYLAKEGGQIAVFDATNTTRERRHMILHFAKENDFKAFFIESVCDDPTVVASNIMEVKISSPDYKDCNSAEAMDDFMKRISCYEASYQPLDPDKCDRDLSLIKVIDVGRRFLVNRVQDHIQSRIVYYLMNIHVQPRTIYLCRHGENEHNLQGRIGGDSGLSSRGKKFASALSKFVEEQNLKDLRVWTSQLKSTIQTAEALRLPYEQWKALNEIDAGVCEELTYEEIRDTYPEEYALREQDKYYYRYPTGESYQDLVQRLEPVIMELERQENVLVICHQAVLRCLLAYFLDKSAEEMPYLKCPLHTVLKLTPVAYGCRVESIYLNVESVCTHRERSEDAKKGPNPLMRRNSVTPLASPEPTKKPRINSFEEHVASTSAALPSCLPPEVPTQLPGQNMKGSRSSADSSRKH.

The segment at 1-245 is 6-phosphofructo-2-kinase; the sequence is MPLELTQSRV…VYYLMNIHVQ (245 aa). Residue 42-50 participates in ATP binding; the sequence is GLPARGKTY. Beta-D-fructose 6-phosphate-binding residues include R75 and R99. D125 is a catalytic residue. 2 residues coordinate beta-D-fructose 6-phosphate: T127 and R133. C155 is an active-site residue. 164–169 serves as a coordination point for ATP; that stretch reads NIMEVK. Residues K169, R190, and Y194 each coordinate beta-D-fructose 6-phosphate. A fructose-2,6-bisphosphatase region spans residues 246 to 520; sequence PRTIYLCRHG…RSSADSSRKH (275 aa). R253 is a beta-D-fructose 2,6-bisphosphate binding site. Residue H254 is the Tele-phosphohistidine intermediate of the active site. 2 residues coordinate beta-D-fructose 2,6-bisphosphate: N260 and G266. The active-site Proton donor/acceptor is the E323. Beta-D-fructose 2,6-bisphosphate is bound by residues Y334, R348, K352, Y363, Q389, and R393. Position 345–348 (345–348) interacts with ATP; the sequence is YALR. ATP contacts are provided by residues 389–393 and Y425; that span reads QAVLR. Positions 443-520 are disordered; the sequence is RERSEDAKKG…RSSADSSRKH (78 aa). Position 461 is a phosphoserine; by AMPK (S461). T463 carries the post-translational modification Phosphothreonine. The residue at position 467 (S467) is a Phosphoserine. A Phosphothreonine; by PKC modification is found at T471. Over residues 502–520 the composition is skewed to polar residues; the sequence is LPGQNMKGSRSSADSSRKH.

In the C-terminal section; belongs to the phosphoglycerate mutase family. Homodimer. Forms a heterodimer with PFKFB2. Post-translationally, phosphorylation by AMPK stimulates activity. Ubiquitous.

It catalyses the reaction beta-D-fructose 2,6-bisphosphate + H2O = beta-D-fructose 6-phosphate + phosphate. The enzyme catalyses beta-D-fructose 6-phosphate + ATP = beta-D-fructose 2,6-bisphosphate + ADP + H(+). In terms of biological role, catalyzes both the synthesis and degradation of fructose 2,6-bisphosphate. This Homo sapiens (Human) protein is 6-phosphofructo-2-kinase/fructose-2,6-bisphosphatase 3 (PFKFB3).